The sequence spans 83 residues: Small ribosomal subunit protein eS27 (83 aa).

A C4-type zinc finger spans residues 37 to 59 (CSGCFKISTVFSHATTVVVCVGC).

Belongs to the eukaryotic ribosomal protein eS27 family. It depends on Zn(2+) as a cofactor.

This Caenorhabditis elegans protein is Small ribosomal subunit protein eS27 (rps-27).